We begin with the raw amino-acid sequence, 103 residues long: Pyrimidine/purine nucleoside phosphorylase (103 aa).

The protein belongs to the nucleoside phosphorylase PpnP family.

The catalysed reaction is a purine D-ribonucleoside + phosphate = a purine nucleobase + alpha-D-ribose 1-phosphate. It catalyses the reaction adenosine + phosphate = alpha-D-ribose 1-phosphate + adenine. It carries out the reaction cytidine + phosphate = cytosine + alpha-D-ribose 1-phosphate. The enzyme catalyses guanosine + phosphate = alpha-D-ribose 1-phosphate + guanine. The catalysed reaction is inosine + phosphate = alpha-D-ribose 1-phosphate + hypoxanthine. It catalyses the reaction thymidine + phosphate = 2-deoxy-alpha-D-ribose 1-phosphate + thymine. It carries out the reaction uridine + phosphate = alpha-D-ribose 1-phosphate + uracil. The enzyme catalyses xanthosine + phosphate = alpha-D-ribose 1-phosphate + xanthine. Catalyzes the phosphorolysis of diverse nucleosides, yielding D-ribose 1-phosphate and the respective free bases. Can use uridine, adenosine, guanosine, cytidine, thymidine, inosine and xanthosine as substrates. Also catalyzes the reverse reactions. This Laribacter hongkongensis (strain HLHK9) protein is Pyrimidine/purine nucleoside phosphorylase.